A 159-amino-acid chain; its full sequence is 3-hydroxyacyl-[acyl-carrier-protein] dehydratase FabZ (159 aa).

The active site involves H62.

It belongs to the thioester dehydratase family. FabZ subfamily.

Its subcellular location is the cytoplasm. The catalysed reaction is a (3R)-hydroxyacyl-[ACP] = a (2E)-enoyl-[ACP] + H2O. Functionally, involved in unsaturated fatty acids biosynthesis. Catalyzes the dehydration of short chain beta-hydroxyacyl-ACPs and long chain saturated and unsaturated beta-hydroxyacyl-ACPs. The sequence is that of 3-hydroxyacyl-[acyl-carrier-protein] dehydratase FabZ from Methylobacterium nodulans (strain LMG 21967 / CNCM I-2342 / ORS 2060).